The following is a 285-amino-acid chain: MEKRPYSVEWLSESSQRKAVYSNADLLGYKSGNPDKESNISLPSRATGPTLPSVDYREKENYCVRNVQNEERSPPVKDQLHSQPAPQELDTSRRALMVVPACERSTDQGNKVTGTTDTNKKAKPVCDEDAAARARTKFSPEQLEELERSFKENRYIGSSEKRRLSKVLKLSETQIKTWFQNRRMKFKRQTQDARVDAFFSGLYVPYYGYPDLPTPGYSVQPEFSVLAPHTMAAPSLPFGPLQSTVISPGLHPTAIPSANLGSYPYSSMLVHPMLNEPKRQRYSPY.

Disordered regions lie at residues 30–54 (KSGN…LPSV) and 69–88 (NEER…APQE). Residues 69–80 (NEERSPPVKDQL) show a composition bias toward basic and acidic residues. A DNA-binding region (homeobox) is located at residues 131-190 (AARARTKFSPEQLEELERSFKENRYIGSSEKRRLSKVLKLSETQIKTWFQNRRMKFKRQT).

Widely expressed in the embryo prior to gastrulation. Becomes restricted to the ventral marginal zone by mid/late gastrulation. Ventral localization persists during gastrulation and neurulation in the ventral region of the closed blastopore and in the proctodeum during tail bud stages.

The protein resides in the nucleus. Transcriptional repressor. Acts in a ventral signaling pathway downstream of bmp4 to antagonize the Spemann organizer and ventrally pattern the embryonic mesoderm. Represses transcription of the dorsal genes gsc and otx2. The polypeptide is Homeobox protein vex1 (Xenopus laevis (African clawed frog)).